The following is a 424-amino-acid chain: Serine--tRNA ligase (424 aa).

Thr-230–Glu-232 is an L-serine binding site. ATP-binding positions include Arg-261–Glu-263 and Val-277. Glu-284 is an L-serine binding site. Glu-348–Ser-351 is a binding site for ATP. Thr-382 contributes to the L-serine binding site.

It belongs to the class-II aminoacyl-tRNA synthetase family. Type-1 seryl-tRNA synthetase subfamily. Homodimer. The tRNA molecule binds across the dimer.

The protein resides in the cytoplasm. It carries out the reaction tRNA(Ser) + L-serine + ATP = L-seryl-tRNA(Ser) + AMP + diphosphate + H(+). It catalyses the reaction tRNA(Sec) + L-serine + ATP = L-seryl-tRNA(Sec) + AMP + diphosphate + H(+). It functions in the pathway aminoacyl-tRNA biosynthesis; selenocysteinyl-tRNA(Sec) biosynthesis; L-seryl-tRNA(Sec) from L-serine and tRNA(Sec): step 1/1. In terms of biological role, catalyzes the attachment of serine to tRNA(Ser). Is also able to aminoacylate tRNA(Sec) with serine, to form the misacylated tRNA L-seryl-tRNA(Sec), which will be further converted into selenocysteinyl-tRNA(Sec). This Nocardioides sp. (strain ATCC BAA-499 / JS614) protein is Serine--tRNA ligase.